The sequence spans 496 residues: Glutamyl-tRNA(Gln) amidotransferase subunit A (496 aa).

Active-site charge relay system residues include K75 and S150. S174 acts as the Acyl-ester intermediate in catalysis.

Belongs to the amidase family. GatA subfamily. As to quaternary structure, heterotrimer of A, B and C subunits.

It carries out the reaction L-glutamyl-tRNA(Gln) + L-glutamine + ATP + H2O = L-glutaminyl-tRNA(Gln) + L-glutamate + ADP + phosphate + H(+). Functionally, allows the formation of correctly charged Gln-tRNA(Gln) through the transamidation of misacylated Glu-tRNA(Gln) in organisms which lack glutaminyl-tRNA synthetase. The reaction takes place in the presence of glutamine and ATP through an activated gamma-phospho-Glu-tRNA(Gln). The polypeptide is Glutamyl-tRNA(Gln) amidotransferase subunit A (Burkholderia ambifaria (strain ATCC BAA-244 / DSM 16087 / CCUG 44356 / LMG 19182 / AMMD) (Burkholderia cepacia (strain AMMD))).